Consider the following 433-residue polypeptide: Serine hydroxymethyltransferase (433 aa).

(6S)-5,6,7,8-tetrahydrofolate contacts are provided by residues L132 and 136–138 (GHL). An N6-(pyridoxal phosphate)lysine modification is found at K241.

Belongs to the SHMT family. Homodimer. Requires pyridoxal 5'-phosphate as cofactor.

It is found in the cytoplasm. It carries out the reaction (6R)-5,10-methylene-5,6,7,8-tetrahydrofolate + glycine + H2O = (6S)-5,6,7,8-tetrahydrofolate + L-serine. It participates in one-carbon metabolism; tetrahydrofolate interconversion. The protein operates within amino-acid biosynthesis; glycine biosynthesis; glycine from L-serine: step 1/1. Catalyzes the reversible interconversion of serine and glycine with tetrahydrofolate (THF) serving as the one-carbon carrier. This reaction serves as the major source of one-carbon groups required for the biosynthesis of purines, thymidylate, methionine, and other important biomolecules. Also exhibits THF-independent aldolase activity toward beta-hydroxyamino acids, producing glycine and aldehydes, via a retro-aldol mechanism. The protein is Serine hydroxymethyltransferase of Bradyrhizobium sp. (strain ORS 278).